A 540-amino-acid chain; its full sequence is RNA exonuclease 3 (540 aa).

Residues 7 to 34 (QFKHIVCPFLRTGRKCQSRNCFFSHDFQ) form a C3H1-type zinc finger. The 148-residue stretch at 382 to 529 (HCALDCELCY…EDAVSALQLV (148 aa)) folds into the Exonuclease domain.

Belongs to the REXO1/REXO3 family.

Its subcellular location is the cytoplasm. It is found in the nucleus. 3' to 5' exoribonuclease required for proper 3' end maturation of MRP RNA and of the U5L snRNA. The polypeptide is RNA exonuclease 3 (rex3) (Schizosaccharomyces pombe (strain 972 / ATCC 24843) (Fission yeast)).